A 98-amino-acid chain; its full sequence is Small ribosomal subunit protein bS6 (98 aa).

This sequence belongs to the bacterial ribosomal protein bS6 family.

In terms of biological role, binds together with bS18 to 16S ribosomal RNA. This is Small ribosomal subunit protein bS6 from Staphylococcus epidermidis (strain ATCC 35984 / DSM 28319 / BCRC 17069 / CCUG 31568 / BM 3577 / RP62A).